The sequence spans 98 residues: NADH-ubiquinone oxidoreductase chain 4L (98 aa).

3 helical membrane-spanning segments follow: residues 1 to 21 (MTSINLNLTVAFSLALAGVLI), 28 to 48 (STLLCLEGMMLSLFVMMALLI), and 59 to 79 (APIILLVFSACEAGVGLALLV).

The protein belongs to the complex I subunit 4L family. In terms of assembly, core subunit of respiratory chain NADH dehydrogenase (Complex I) which is composed of 45 different subunits.

It is found in the mitochondrion inner membrane. It catalyses the reaction a ubiquinone + NADH + 5 H(+)(in) = a ubiquinol + NAD(+) + 4 H(+)(out). Its function is as follows. Core subunit of the mitochondrial membrane respiratory chain NADH dehydrogenase (Complex I) which catalyzes electron transfer from NADH through the respiratory chain, using ubiquinone as an electron acceptor. Part of the enzyme membrane arm which is embedded in the lipid bilayer and involved in proton translocation. The polypeptide is NADH-ubiquinone oxidoreductase chain 4L (MT-ND4L) (Trichosurus vulpecula (Brush-tailed possum)).